A 74-amino-acid polypeptide reads, in one-letter code: MKSFYHYLLKYRHPKPKDSISEFANQAYEDHSFPKTSTDYHEISSYLELNADYLHTMATFDEAWDQYESEVHGR.

It belongs to the UPF0346 family.

In Bacillus subtilis (strain 168), this protein is UPF0346 protein YozE (yozE).